A 976-amino-acid polypeptide reads, in one-letter code: Protein PLASTID MOVEMENT IMPAIRED 1-RELATED 2 (976 aa).

Residues isoleucine 81 to valine 229 enclose the C2 NT-type domain. Basic and acidic residues predominate over residues lysine 309 to lysine 319. 2 disordered regions span residues lysine 309 to arginine 343 and asparagine 381 to lysine 419. The segment covering serine 394–aspartate 414 has biased composition (low complexity).

Seems not necessary for chloroplast and nuclear photorelocation movements. The sequence is that of Protein PLASTID MOVEMENT IMPAIRED 1-RELATED 2 from Arabidopsis thaliana (Mouse-ear cress).